Consider the following 203-residue polypeptide: B-cell CLL/lymphoma 7 protein family member B-A (203 aa).

Disordered regions lie at residues 55-80 (KEKE…ESSD) and 94-148 (SNQS…EIME). Residues 109-129 (ADSSNNSSPPASEPVSPAPQS) are compositionally biased toward low complexity.

It belongs to the BCL7 family.

This chain is B-cell CLL/lymphoma 7 protein family member B-A (bcl7ba), found in Danio rerio (Zebrafish).